A 644-amino-acid polypeptide reads, in one-letter code: (E2-independent) E3 ubiquitin-conjugating enzyme FATS (644 aa).

Positions 1-67 are required for interaction with p53/TP53; sequence MISPVVISRL…LGILTPSDDQ (67 aa). Disordered regions lie at residues 62–83, 305–349, 367–413, and 475–507; these read TPSDDQGLETEPLSTGDNLGKG, LGSG…SSHT, VLSG…SILS, and NEDPTVTPEPSPATPSPSTPEGAQSSDPSEDSY. Residues 67–175 form a required for interaction with HDAC1 region; that stretch reads QGLETEPLST…RLSARQDYWV (109 aa). Positions 398–410 are enriched in low complexity; that stretch reads EGDSSPSSDGQPS. A compositionally biased stretch (pro residues) spans 481-492; that stretch reads TPEPSPATPSPS. The ALMS motif stretch occupies residues 516–644; the sequence is TLQEALEVHR…LDQLLQRNAV (129 aa). Residues 598-629 adopt a coiled-coil conformation; that stretch reads KRIYNNLPEVKKKKEEQKKRMILQSNRLRAEV.

As to quaternary structure, interacts with HDAC1; the interaction prevents binding of HDAC1 to CDKN1A/p21 and facilitates the acetylation and stabilization of CDKN1A/p21. Interacts with p53/TP53; the interaction inhibits binding of p53/TP53 and MDM2. Highly expressed in testis. Weak expression found in brain, lung, heart, ovary, thymus, spleen and kidney.

Its subcellular location is the cytoplasm. It localises to the cytoskeleton. The protein resides in the microtubule organizing center. The protein localises to the centrosome. Its function is as follows. Tumor suppressor that is required to sustain G2/M checkpoint after DNA damage. Acts as a p53/TP53 activator by inhibiting MDM2 binding to p53/TP53 and stimulating non-proteolytic polyubiquitination of p53/TP53. Exhibits ubiquitin ligase (E3) activity and assemble ubiquitin polymers through 'Lys-11'- (K11-), 'Lys-29'- (K29-) and 'Lys-63'- (K63)-linkages, independently of the ubiquitin-conjugating enzyme (E2). Promotes p53/TP53-dependent transcription of CDKN1A/p21, leading to robust checkpoint response. Mediates CDKN1A/p21 protein stability in a ubiquitin-independent manner. Interacts with HDAC1 and prevents binding of HDAC1 to CDKN1A/p21 and facilitates the acetylation and stabilization of CDKN1A/p21. May have a role in the assembly of primary cilia. The polypeptide is (E2-independent) E3 ubiquitin-conjugating enzyme FATS (Mus musculus (Mouse)).